Consider the following 245-residue polypeptide: Complement C1q subcomponent subunit C (245 aa).

An N-terminal signal peptide occupies residues Met-1–Ala-28. Residues Gly-31–Gly-112 enclose the Collagen-like domain. Residues Pro-36, Pro-39, Pro-42, Pro-45, and Pro-63 each carry the 4-hydroxyproline modification. The disordered stretch occupies residues Pro-42–Gln-119. Lys-75 is modified (5-hydroxylysine). The O-linked (Gal...) hydroxylysine glycan is linked to Lys-75. Pro-81, Pro-96, Pro-99, and Pro-105 each carry 4-hydroxyproline. The segment covering Asp-98–Glu-107 has biased composition (pro residues). The 131-residue stretch at Lys-115 to Asp-245 folds into the C1q domain. A disulfide bridge connects residues Cys-179 and Cys-193.

In terms of assembly, core component of the complement C1 complex, a calcium-dependent complex composed of 1 molecule of the C1Q subcomplex, 2 molecules of C1R and 2 molecules of C1S. The C1Q subcomplex is composed 18 subunits: 3 chains of C1QA, C1QB, and C1QC trimerize to form 6 collagen-like triple helices connected to six globular ligand-recognition modules (C1q domain). Post-translationally, O-linked glycans consist of Glc-Gal disaccharides bound to the oxygen atom of post-translationally added hydroxyl groups.

It localises to the secreted. The protein resides in the cell surface. Its activity is regulated as follows. The C1Q subcomplex is inhibited by sulfated molecules, such as triterpenoid sulfates, heparan sulfate, or chondroitin sulfates. Core component of the complement C1 complex, a multiprotein complex that initiates the classical pathway of the complement system, a cascade of proteins that leads to phagocytosis and breakdown of pathogens and signaling that strengthens the adaptive immune system. The classical complement pathway is initiated by the C1Q subcomplex of the C1 complex, which specifically binds IgG or IgM immunoglobulins complexed with antigens, forming antigen-antibody complexes on the surface of pathogens: C1QA, together with C1QB and C1QC, specifically recognizes and binds the Fc regions of IgG or IgM via its C1q domain. Immunoglobulin-binding activates the proenzyme C1R, which cleaves C1S, initiating the proteolytic cascade of the complement system. The C1Q subcomplex is activated by a hexamer of IgG complexed with antigens, while it is activated by a pentameric IgM. The C1Q subcomplex also recognizes and binds phosphatidylserine exposed on the surface of cells undergoing programmed cell death, possibly promoting activation of the complement system. This Rattus norvegicus (Rat) protein is Complement C1q subcomponent subunit C.